Consider the following 229-residue polypeptide: Mannose-specific lectin TAR1 (229 aa).

A signal peptide spans 1-23 (MAKLLLFLLPAILGLLIPRSAVA). Bulb-type lectin domains lie at 26-131 (TNYL…PWVP) and 145-229 (DNLL…DYVL). Beta-D-mannose-binding positions include 51–55 (QNDCN), tyrosine 59, tryptophan 63, glutamine 64, 170–174 (QGDCN), tyrosine 178, and 182–185 (YGWQ). Positions 51–59 (QNDCNLVLY) match the Carbohydrate-binding motif 1 motif. 2 disulfides stabilise this stretch: cysteine 54–cysteine 74 and cysteine 173–cysteine 195. The Carbohydrate-binding motif 2 signature appears at 170 to 178 (QGDCNLVLY).

Forms heterotetramer of 2 chains 1 and 2 chains 2 arranged as a dimer of chain 1 and chain 2 heterodimers.

The protein localises to the secreted. Mannose-specific lectin. Shows agglutinating activity towards erythrocytes from rabbit. In Colocasia esculenta (Wild taro), this protein is Mannose-specific lectin TAR1.